The following is a 966-amino-acid chain: Probable transport protein MmpL11 (966 aa).

Transmembrane regions (helical) follow at residues 13 to 33, 188 to 208, 214 to 234, 235 to 255, 279 to 299, 311 to 331, 373 to 393, 527 to 547, 557 to 577, 595 to 615, 646 to 666, and 668 to 688; these read WLVFTGWLLALVPAVYLAMTQ, IILMVLVAVFGSLAAAAIPLA, VVITMGLVFVLSMHTTMSVFV, TSTVSMFGIALAVDYSLFILM, GLAVVLSGMTVIASLTGIYLI, AILAVAVAMLTSATLTPAVLA, ALAASTVLLVMAAPATLMVLG, TQPLVLVFVAVIAFLMLLISI, VLMTLLSVAAAYGSLVMVFQW, VPPLVLAMTFGLSMDYEIFLL, AALIMIAVFCGFAFAGMPLVA, and IGVACAVAIAVDATVVRLVLV.

It belongs to the resistance-nodulation-cell division (RND) (TC 2.A.6) family. MmpL subfamily.

Its subcellular location is the cell membrane. This Mycobacterium bovis (strain ATCC BAA-935 / AF2122/97) protein is Probable transport protein MmpL11 (mmpL11).